The chain runs to 207 residues: Ion-translocating oxidoreductase complex subunit G (207 aa).

Residues 11 to 31 (GILLGFIALLCTIISTGIFFL) traverse the membrane as a helical segment. At Thr175 the chain carries FMN phosphoryl threonine.

Belongs to the RnfG family. As to quaternary structure, the complex is composed of six subunits: RnfA, RnfB, RnfC, RnfD, RnfE and RnfG. It depends on FMN as a cofactor.

Its subcellular location is the cell inner membrane. Functionally, part of a membrane-bound complex that couples electron transfer with translocation of ions across the membrane. The sequence is that of Ion-translocating oxidoreductase complex subunit G from Haemophilus influenzae (strain 86-028NP).